The sequence spans 92 residues: Parbolysin P7 (92 aa).

3 cysteine pairs are disulfide-bonded: cysteine 15–cysteine 36, cysteine 21–cysteine 32, and cysteine 46–cysteine 59.

It belongs to the worm cytolysin family. In terms of tissue distribution, localized within the skin and proboscis and are most readily isolated from body mucus secretions.

The protein localises to the secreted. Cytolysin that shows hemolytic activity (on bovine erythrocytes, HC(50)=5.75 mg/ml). This hemolytic activity is completely inhibited by small unilamelar vesicles composed of PC/PG, PC/PI and PC/PS in 1:1 molar ratios (with at least 100 mg/ml concentration). The polypeptide is Parbolysin P7 (Parborlasia corrugatus (Antarctic nemertean worm)).